Consider the following 296-residue polypeptide: Large ribosomal subunit protein uL15m (296 aa).

The transit peptide at 1 to 20 (MAASGGSGGKATELLRCLPR) directs the protein to the mitochondrion. The disordered stretch occupies residues 25 to 66 (NLRPNPGARHREKRRGRGIHGGRKSGRGHKGETQRGNQPRLG). The span at 32–52 (ARHREKRRGRGIHGGRKSGRG) shows a compositional bias: basic residues.

This sequence belongs to the universal ribosomal protein uL15 family. In terms of assembly, component of the mitochondrial ribosome large subunit (39S) which comprises a 16S rRNA and about 50 distinct proteins.

It localises to the mitochondrion. The polypeptide is Large ribosomal subunit protein uL15m (mrpl15) (Xenopus laevis (African clawed frog)).